The sequence spans 134 residues: Small ribosomal subunit protein uS8c (134 aa).

It belongs to the universal ribosomal protein uS8 family. In terms of assembly, part of the 30S ribosomal subunit.

Its subcellular location is the plastid. It is found in the chloroplast. In terms of biological role, one of the primary rRNA binding proteins, it binds directly to 16S rRNA central domain where it helps coordinate assembly of the platform of the 30S subunit. This Lotus japonicus (Lotus corniculatus var. japonicus) protein is Small ribosomal subunit protein uS8c (rps8).